A 244-amino-acid chain; its full sequence is MKLIKTKGIVLKETNFEESSKILTVLTSDFGKIQVLSKNCRRLLSVLSACSQPLMFCEFVIRKTKDIYSISSASVIESFFELSQDVNLAIYSGYLIELVDSFLEFEQKNEDVLRLLLNSLYLLKKGKDPEVVSRIFEIKILVYTGFFLQFTQCVKCQRKDITRAFFSFKDGGLTCEKCKEENDIEIEIEVVKSILVIVATNLKKLNKISLERSLNNKIKTITLPYIKMVLQKDIKILDFFRFIQ.

This sequence belongs to the RecO family.

Its function is as follows. Involved in DNA repair and RecF pathway recombination. In Caldicellulosiruptor bescii (strain ATCC BAA-1888 / DSM 6725 / KCTC 15123 / Z-1320) (Anaerocellum thermophilum), this protein is DNA repair protein RecO.